Reading from the N-terminus, the 661-residue chain is KVSDSAYSNSCSNSQSQRSGSSKSRLSGSHSSGSSGYGGKPSTQASSSDMIIKRNKDKSRKKKKNKGAGQGAGQAQTLISASTSLEGRDEEKPRPSGTGCVEQQICRELQDQQHGEDHSEPQAAEQLQQEEDQSGSESEADRVEGVAKSEAVQSFPIPSPLSVTIVPPSMGGCGGVGHAAGLDSGLAKFDKTWEAGPGKLESMTGVGAAAAGTGQRGERVKEDSFCCVISMHDGIVLYTTPSITDVLGYPRDMWLGRSFIDFVHLKDRATFASQITTGIPIAESRGSVPKDAKSTFCVMLRRYRGLKSGGFGVIGRPVSYEPFRLGLTFREAPEEARPDNYMVSNGTNMLLVICATPIKSSYKVPDEILSQKSPKFAIRHTATGIISHVDSAAVSALGYLPQDLIGRSIMDFYHHEDLSVMKETYETVMKKGQTAGASFCSKPYRFLIQNGCYVLLETEWTSFVNPWSRKLEFVVGHHRVFQGPKQCNVFEAAPTCKLKISEEAQSRNTRIKEDIVKRLAETVSRPSDTVKQEVSRRCQALASFMETLMDEVSRADLKEGSGGSGSSGNFTTASNIHMSSVTNTSIAGTGGTGTGTGTGTGTGTGTGTGTGTGTGTGTGTGTGTGTGTGTGNGTNSGTTSSSRGGSAAAPPVTLTESLLNK.

The segment covering lysine 1 to serine 34 has biased composition (low complexity). The disordered stretch occupies residues lysine 1–alanine 151. The Nuclear localization signal motif lies at lysine 53–lysine 66. Over residues lysine 53–lysine 66 the composition is skewed to basic residues. Over residues glutamate 108–glutamate 120 the composition is skewed to basic and acidic residues. 2 consecutive PAS domains span residues aspartate 223 to isoleucine 358 and phenylalanine 376 to glutamine 482. A disordered region spans residues threonine 582–lysine 661. A compositionally biased stretch (gly residues) spans glycine 588–threonine 634. Repeat copies occupy residues glycine 591–threonine 592, glycine 593–threonine 594, glycine 595–threonine 596, glycine 597–threonine 598, glycine 599–threonine 600, glycine 601–threonine 602, glycine 603–threonine 604, glycine 605–threonine 606, glycine 607–threonine 608, glycine 609–threonine 610, glycine 611–threonine 612, glycine 613–threonine 614, glycine 615–threonine 616, glycine 617–threonine 618, glycine 619–threonine 620, glycine 621–threonine 622, glycine 623–threonine 624, glycine 625–threonine 626, glycine 627–threonine 628, glycine 629–threonine 630, glycine 631–asparagine 632, and glycine 633–threonine 634. The tract at residues glycine 591–threonine 638 is 24 X 2 AA approximate tandem repeats of G-[TN]. A 23; approximate repeat occupies asparagine 635 to serine 636. The span at asparagine 635–serine 646 shows a compositional bias: low complexity. Repeat unit 24 spans residues glycine 637 to threonine 638.

In terms of assembly, forms a heterodimer with timeless (TIM); the complex then translocates into the nucleus. Phosphorylated with a circadian rhythmicity, probably by the double-time protein (dbt). Phosphorylation could be implicated in the stability of per monomer and in the formation of heterodimer per-tim.

It is found in the nucleus. Its subcellular location is the cytoplasm. The protein localises to the perinuclear region. Functionally, essential for biological clock functions. Determines the period length of circadian and ultradian rhythms; an increase in PER dosage leads to shortened circadian rhythms and a decrease leads to lengthened circadian rhythms. Essential for the circadian rhythmicity of locomotor activity, eclosion behavior, and for the rhythmic component of the male courtship song that originates in the thoracic nervous system. The biological cycle depends on the rhythmic formation and nuclear localization of the TIM-PER complex. Light induces the degradation of TIM, which promotes elimination of PER. Nuclear activity of the heterodimer coordinatively regulates PER and TIM transcription through a negative feedback loop. Behaves as a negative element in circadian transcriptional loop. Does not appear to bind DNA, suggesting indirect transcriptional inhibition. The sequence is that of Period circadian protein (per) from Drosophila sechellia (Fruit fly).